The sequence spans 242 residues: ADP-dependent L-serine kinase SerK (242 aa).

Residue glutamate 30 is part of the active site. ADP is bound by residues serine 43, isoleucine 49, tryptophan 51, and lysine 52. Valine 68 is an O-phospho-L-serine binding site. ADP-binding residues include aspartate 69, glycine 70, histidine 71, histidine 72, and arginine 73. Aspartate 69 serves as a coordination point for Mg(2+). The O-phospho-L-serine site is built by glycine 70, histidine 71, and histidine 72. O-phospho-L-serine is bound by residues tryptophan 102, lysine 221, threonine 223, and histidine 225.

It belongs to the SerK family. The cofactor is Mg(2+).

It catalyses the reaction L-serine + ADP = O-phospho-L-serine + AMP + H(+). It functions in the pathway amino-acid biosynthesis; L-cysteine biosynthesis; L-cysteine from L-serine: step 1/2. In terms of biological role, free serine kinase that uses ADP to phosphorylate L-serine to yield O-phospho-L-serine and AMP. The sequence is that of ADP-dependent L-serine kinase SerK from Thermococcus kodakarensis (strain ATCC BAA-918 / JCM 12380 / KOD1) (Pyrococcus kodakaraensis (strain KOD1)).